The sequence spans 358 residues: Probable dual-specificity RNA methyltransferase RlmN 2 (358 aa).

The Proton acceptor role is filled by glutamate 90. One can recognise a Radical SAM core domain in the interval 96 to 328; that stretch reads SGIRRTVCVS…VNTCRYTKGD (233 aa). A disulfide bridge connects residues cysteine 103 and cysteine 334. Positions 110, 114, and 117 each coordinate [4Fe-4S] cluster. Residues 160–161, serine 192, 215–217, and asparagine 291 each bind S-adenosyl-L-methionine; these read GE and SLH. The S-methylcysteine intermediate role is filled by cysteine 334.

Belongs to the radical SAM superfamily. RlmN family. The cofactor is [4Fe-4S] cluster.

The protein resides in the cytoplasm. The enzyme catalyses adenosine(2503) in 23S rRNA + 2 reduced [2Fe-2S]-[ferredoxin] + 2 S-adenosyl-L-methionine = 2-methyladenosine(2503) in 23S rRNA + 5'-deoxyadenosine + L-methionine + 2 oxidized [2Fe-2S]-[ferredoxin] + S-adenosyl-L-homocysteine. The catalysed reaction is adenosine(37) in tRNA + 2 reduced [2Fe-2S]-[ferredoxin] + 2 S-adenosyl-L-methionine = 2-methyladenosine(37) in tRNA + 5'-deoxyadenosine + L-methionine + 2 oxidized [2Fe-2S]-[ferredoxin] + S-adenosyl-L-homocysteine. Functionally, specifically methylates position 2 of adenine 2503 in 23S rRNA and position 2 of adenine 37 in tRNAs. In Protochlamydia amoebophila (strain UWE25), this protein is Probable dual-specificity RNA methyltransferase RlmN 2.